The sequence spans 509 residues: MEEIQRYLQPDRSQQHNFLYPLIFQEYIYALAHDHGLNRNRSILLENPGYNNKLSFLIVKRLITRMYQQNHFLISTNDSNKNEFLGCNKSLYSQMISEGFAFIVEIPFSLRLISSLSSFEGKKIFKSHNLRSIHSTFPFLEDNFSHLNYVLDILIPYPVHLEILVQTLRYWVKDASSLHLLRFFLHEYWNLNSLITSKKPGYSFSKKKQRFFFFLYNSYVYECESTFVFLRNQSSHLRSTSFGALLERIYFYGKIERLIEVFAKDFQVTLCLFKDPFMHYVRYQGKSILASKGTFLLMNKWKFYLVNFWQCHFSLCFHTGRIHINQLSNHSRDFMGYLSSVRLNSSMVRSQMLENSFLINNAIKKFDTLVPIIPLIGSLAKANFCTVLGHPISKPVWSDLSDSDIIDRFGRICKNLFHYYSGSSKKKTLYRIKYILRLSCARTLARKHKSTVRAFLKRSGSELLEEFLTSEEQVLSLTFPRASSNLWGVYRSRIWYLDIFCINDLANYQ.

Belongs to the intron maturase 2 family. MatK subfamily.

It is found in the plastid. The protein resides in the chloroplast. In terms of biological role, usually encoded in the trnK tRNA gene intron. Probably assists in splicing its own and other chloroplast group II introns. The chain is Maturase K from Nicotiana tomentosiformis (Tobacco).